The sequence spans 151 residues: 3-dehydroquinate dehydratase (151 aa).

Catalysis depends on Tyr24, which acts as the Proton acceptor. The substrate site is built by Asn76, His82, and Asp89. Residue His102 is the Proton donor of the active site. Residues 103-104 and Arg113 contribute to the substrate site; that span reads VS.

The protein belongs to the type-II 3-dehydroquinase family. In terms of assembly, homododecamer.

It carries out the reaction 3-dehydroquinate = 3-dehydroshikimate + H2O. The protein operates within metabolic intermediate biosynthesis; chorismate biosynthesis; chorismate from D-erythrose 4-phosphate and phosphoenolpyruvate: step 3/7. Functionally, catalyzes a trans-dehydration via an enolate intermediate. The chain is 3-dehydroquinate dehydratase from Rhodopseudomonas palustris (strain HaA2).